The chain runs to 1480 residues: Cystic fibrosis transmembrane conductance regulator (1480 aa).

At 1-77 the chain is on the cytoplasmic side; the sequence is MQRSPLEKAS…KLINALRRCF (77 aa). The helical transmembrane segment at 78 to 98 threads the bilayer; sequence FWRFMFYGILLYLGEVTKAVQ. Residues 81 to 365 form the ABC transmembrane type-1 1 domain; that stretch reads FMFYGILLYL…WAVQTWYDSL (285 aa). The Extracellular portion of the chain corresponds to 99–122; sequence PLLLGRIIASYDPDNKTERSIAIY. A helical transmembrane segment spans residues 123–146; sequence LGIGLCLLFIVRTLLLHPAIFGLH. Topologically, residues 147–195 are cytoplasmic; it reads HIGMQMRIAMFSLIYKKTLKLSSRVLDKISIGQLVSLLSNNLNKFDEGL. The chain crosses the membrane as a helical span at residues 196–216; the sequence is ALAHFVWIAPLQVALLMGLIW. Topologically, residues 217–222 are extracellular; that stretch reads ELLQAS. The chain crosses the membrane as a helical span at residues 223-243; that stretch reads VFCGLGFLIVLALFQAGLGRM. Topologically, residues 244 to 298 are cytoplasmic; that stretch reads MMKYRDQRAGKINERLVITSEMIENIQSVKAYCWEEAMEKMIENLRQTELKLTRK. The chain crosses the membrane as a helical span at residues 299–319; that stretch reads AAYVRYFNSSAFFFSGFFVVF. The Extracellular portion of the chain corresponds to 320–339; sequence LSVLPYALIKGIILRKIFTT. The chain crosses the membrane as a helical span at residues 340–358; sequence ISFCIVLRMAVTRQFPWAV. Topologically, residues 359-858 are cytoplasmic; it reads QTWYDSLGAI…YLRYITLHKS (500 aa). ATP contacts are provided by residues W401, S434, 458–465, and Q493; that span reads GSTGAGKT. The ABC transporter 1 domain occupies 423–646; sequence NGHDNLFFSN…RPDFSSKLMG (224 aa). C524 carries the S-palmitoyl cysteine lipid modification. A phosphoserine mark is found at S549 and S660. The tract at residues 654–831 is disordered R region; that stretch reads SSERRNSILT…EEINEEDLKE (178 aa). A Phosphoserine; by PKA modification is found at S670. Position 686 is a phosphoserine (S686). A Glycyl lysine isopeptide (Lys-Gly) (interchain with G-Cter in ubiquitin) cross-link involves residue K688. Phosphoserine occurs at positions 700 and 712. T717 is subject to Phosphothreonine. Phosphoserine is present on residues S737, S753, S768, S790, S795, and S813. Residues 859–879 traverse the membrane as a helical segment; sequence LIFVLIWCLVIFLAEVAASLV. The ABC transmembrane type-1 2 domain maps to 859–1155; sequence LIFVLIWCLV…AVNSSIDVDS (297 aa). At 880-918 the chain is on the extracellular side; it reads VLWLLGNTSFQDKGNSTYSRNNSYAVIITNTSSYYVFYI. 3 N-linked (GlcNAc...) asparagine glycosylation sites follow: N894, N900, and N909. Residues 919–939 traverse the membrane as a discontinuously helical segment; it reads YVGVADTLLALGFFRGLPLVH. The Cytoplasmic segment spans residues 940–990; the sequence is TLITVSKILHHKMLHSVLQAPMSTLNTLKAGGILNRFSKDIAILDDLLPLT. Residues 991–1011 form a helical membrane-spanning segment; sequence IFDFIQLLLIVIGAIAVVSVL. Residues 1012-1013 lie on the Extracellular side of the membrane; the sequence is QP. A helical transmembrane segment spans residues 1014–1034; sequence YIFLATVPVIAAFILLRAYFL. Residues 1035–1095 are Cytoplasmic-facing; it reads QTSQQLKQLE…TANWFLYLST (61 aa). The chain crosses the membrane as a helical span at residues 1096 to 1116; the sequence is LRWFQMRIEMIFVIFFIAVTF. Residues 1117 to 1130 are Extracellular-facing; the sequence is ISILTTGEGEGTVG. Residues 1131–1151 form a helical membrane-spanning segment; it reads IILTLAMNIMSTLQWAVNSSI. Residues 1152–1480 lie on the Cytoplasmic side of the membrane; sequence DVDSLMRSVS…TEEEVQETRL (329 aa). Residues 1210–1443 enclose the ABC transporter 2 domain; it reads MTIKDLTAKY…KSLFQQAISH (234 aa). ATP-binding positions include Y1219 and 1244–1251; that span reads GRTGSGKS. Positions 1386 to 1480 are interaction with GORASP2; that stretch reads RALKQAFADC…TEEEVQETRL (95 aa). A lipid anchor (S-palmitoyl cysteine) is attached at C1395. 2 positions are modified to phosphoserine: S1444 and S1456. Positions 1452-1480 are disordered; sequence HRNSSKYKSRPQIASLKEETEEEVQETRL. Residues 1470-1480 show a composition bias toward acidic residues; it reads ETEEEVQETRL. Residues 1478–1480 carry the PDZ-binding motif; it reads TRL.

Belongs to the ABC transporter superfamily. ABCC family. CFTR transporter (TC 3.A.1.202) subfamily. Monomer; does not require oligomerization for channel activity. May form oligomers in the membrane. Interacts with SLC26A3, SLC26A6 and NHERF1. Interacts with SHANK2. Interacts with MYO6. Interacts (via C-terminus) with GOPC (via PDZ domain); this promotes CFTR internalization and thereby decreases channel activity. Interacts with SLC4A7 through NHERF1. Found in a complex with MYO5B and RAB11A. Interacts with ANO1. Interacts with SLC26A8. Interacts with AHCYL1; the interaction increases CFTR activity. Interacts with CSE1L. The core-glycosylated form interacts with GORASP2 (via PDZ GRASP-type 1 domain) in respone to ER stress. Interacts with MARCHF2; the interaction leads to CFTR ubiqtuitination and degradation. Interacts with ADGRG2. N-glycosylated. Post-translationally, phosphorylated; cAMP treatment promotes phosphorylation and activates the channel. Dephosphorylation decreases the ATPase activity (in vitro). Phosphorylation at PKA sites activates the channel. Phosphorylation at PKC sites enhances the response to phosphorylation by PKA. Phosphorylated by AMPK; this inhibits channel activity. In terms of processing, ubiquitinated, leading to its degradation in the lysosome. Deubiquitination by USP10 in early endosomes enhances its endocytic recycling to the cell membrane. Ubiquitinated by RNF185 during ER stress. Ubiquitinated by MARCHF2.

Its subcellular location is the apical cell membrane. It localises to the early endosome membrane. It is found in the cell membrane. The protein localises to the recycling endosome membrane. The protein resides in the endoplasmic reticulum membrane. Its subcellular location is the nucleus. The catalysed reaction is ATP + H2O + closed Cl(-) channel = ADP + phosphate + open Cl(-) channel.. The enzyme catalyses chloride(in) = chloride(out). It catalyses the reaction hydrogencarbonate(in) = hydrogencarbonate(out). It carries out the reaction ATP + H2O = ADP + phosphate + H(+). In terms of biological role, epithelial ion channel that plays an important role in the regulation of epithelial ion and water transport and fluid homeostasis. Mediates the transport of chloride ions across the cell membrane. Possesses an intrinsic ATPase activity and utilizes ATP to gate its channel; the passive flow of anions through the channel is gated by cycles of ATP binding and hydrolysis by the ATP-binding domains. The ion channel is also permeable to HCO(3)(-); selectivity depends on the extracellular chloride concentration. Exerts its function also by modulating the activity of other ion channels and transporters. Contributes to the regulation of the pH and the ion content of the epithelial fluid layer. Modulates the activity of the epithelial sodium channel (ENaC) complex, in part by regulating the cell surface expression of the ENaC complex. May regulate bicarbonate secretion and salvage in epithelial cells by regulating the transporter SLC4A7. Can inhibit the chloride channel activity of ANO1. Plays a role in the chloride and bicarbonate homeostasis during sperm epididymal maturation and capacitation. The sequence is that of Cystic fibrosis transmembrane conductance regulator from Plecturocebus moloch (Dusky titi monkey).